The chain runs to 76 residues: Probable 26S proteasome complex subunit dss-1 (76 aa).

Disordered stretches follow at residues 1-28 (MSST…FEEF) and 52-76 (DDET…HPIA). Composition is skewed to basic and acidic residues over residues 7–20 (TKKD…KKET) and 57–70 (ESEF…ELRK).

The protein belongs to the DSS1/SEM1 family. As to quaternary structure, part of the 26S proteasome.

The protein resides in the nucleus. The protein localises to the cytoplasm. Functionally, subunit of the 26S proteasome which plays a role in ubiquitin-dependent proteolysis. Has an essential role in oogenesis and larval growth. Required for intestinal function and default lifespan. The chain is Probable 26S proteasome complex subunit dss-1 from Caenorhabditis briggsae.